Here is a 95-residue protein sequence, read N- to C-terminus: Alpha-bungarotoxin, isoform A31 (95 aa).

An N-terminal signal peptide occupies residues Met1–Thr21. Cystine bridges form between Cys24–Cys44, Cys37–Cys65, Cys50–Cys54, Cys69–Cys80, and Cys81–Cys86.

It belongs to the three-finger toxin family. Long-chain subfamily. Type II alpha-neurotoxin sub-subfamily. Monomer in solution, homodimer in crystal state. As to expression, expressed by the venom gland.

The protein resides in the secreted. Binds with high affinity to muscular (tested on Torpedo marmorata, Kd=0.4 nM) and neuronal (tested on chimeric alpha-7/CHRNA7, Kd=0.95 nM) nicotinic acetylcholine receptor (nAChR) and inhibits acetylcholine from binding to the receptor, thereby impairing neuromuscular and neuronal transmission. It also shows an activity on GABA(A) receptors. It antagonises GABA-activated currents with high potency when tested on primary hippocampal neurons. It inhibits recombinantly expressed GABA(A) receptors composed of alpha-2-beta-2-gamma-2 (GABRA2-GABRB2-GABRG2) subunits with high potency (62.3% inhibition at 20 uM of toxin). It also shows a weaker inhibition on GABA(A) receptors composed of alpha-1-beta-2-gamma-2 (GABRA1-GABRB2-GABRG2) subunits, alpha-4-beta-2-gamma-2 (GABRA4-GABRB2-GABRG2) subunits, and alpha-5-beta-2-gamma-2 (GABRA5-GABRB2-GABRG2) subunits. A very weak inhibition is also observed on GABA(A) receptor composed of alpha-1-beta-3-gamma-2 (GABRA1-GABRB3-GABRG2). It has also been shown to bind and inhibit recombinant GABA(A) receptor beta-3/GABRB3 subunit (Kd=about 50 nM). In addition, it blocks the extracellular increase of dopamine evoked by nicotine only at the higher dose (4.2 uM). In vivo, when intraperitoneally injected into mice, induces flaccid paralysis of the limbs and respiratory distress, and causes death in a dose-dependent manner. The chain is Alpha-bungarotoxin, isoform A31 from Bungarus candidus (Malayan krait).